Reading from the N-terminus, the 188-residue chain is ATP synthase subunit b, chloroplastic (188 aa).

The helical transmembrane segment at 35–57 threads the bilayer; sequence LINLAVVIGVLVYFGKGVLTTLL.

Belongs to the ATPase B chain family. As to quaternary structure, F-type ATPases have 2 components, F(1) - the catalytic core - and F(0) - the membrane proton channel. F(1) has five subunits: alpha(3), beta(3), gamma(1), delta(1), epsilon(1). F(0) has four main subunits: a(1), b(1), b'(1) and c(10-14). The alpha and beta chains form an alternating ring which encloses part of the gamma chain. F(1) is attached to F(0) by a central stalk formed by the gamma and epsilon chains, while a peripheral stalk is formed by the delta, b and b' chains.

Its subcellular location is the plastid. The protein localises to the chloroplast thylakoid membrane. Its function is as follows. F(1)F(0) ATP synthase produces ATP from ADP in the presence of a proton or sodium gradient. F-type ATPases consist of two structural domains, F(1) containing the extramembraneous catalytic core and F(0) containing the membrane proton channel, linked together by a central stalk and a peripheral stalk. During catalysis, ATP synthesis in the catalytic domain of F(1) is coupled via a rotary mechanism of the central stalk subunits to proton translocation. Component of the F(0) channel, it forms part of the peripheral stalk, linking F(1) to F(0). The protein is ATP synthase subunit b, chloroplastic of Zygnema circumcarinatum (Green alga).